The chain runs to 283 residues: Probable endonuclease 4 (283 aa).

Positions 69, 109, 145, 179, 182, 216, 229, 231, and 261 each coordinate Zn(2+).

This sequence belongs to the AP endonuclease 2 family. Zn(2+) is required as a cofactor.

The catalysed reaction is Endonucleolytic cleavage to 5'-phosphooligonucleotide end-products.. Its function is as follows. Endonuclease IV plays a role in DNA repair. It cleaves phosphodiester bonds at apurinic or apyrimidinic (AP) sites, generating a 3'-hydroxyl group and a 5'-terminal sugar phosphate. The sequence is that of Probable endonuclease 4 from Campylobacter concisus (strain 13826).